Reading from the N-terminus, the 570-residue chain is NADPH oxidase 2 (570 aa).

At 2–9 (GNWAVNEG) the chain is on the cytoplasmic side. Residues 10-36 (LSIFVILVWLGLNVFLFVWYYRVYDIP) form a helical membrane-spanning segment. The Extracellular segment spans residues 37 to 46 (PKFFYTRKLL). The chain crosses the membrane as a helical span at residues 47 to 72 (GSALALARAPAACLNFNCMLILLPVC). The region spanning 54–286 (RAPAACLNFN…MFLYLCERLV (233 aa)) is the Ferric oxidoreductase domain. Residues 73-95 (RNLLSFLRGSSACCSTRVRRQLD) are Cytoplasmic-facing. Residues 96-130 (RNLTFHKMVAWMIALHSAIHTIAHLFNVEWCVNAR) traverse the membrane as a helical segment. Heme b-binding residues include His101 and His115. The Extracellular portion of the chain corresponds to 131–163 (VNNSDPYSVALSELGDRQNESYLNFARKRIKNP). 2 N-linked (GlcNAc...) asparagine glycosylation sites follow: Asn132 and Asn149. Lys161 is covalently cross-linked (Glycyl lysine isopeptide (Lys-Gly) (interchain with G-Cter in ubiquitin)). The helical transmembrane segment at 164-194 (EGGLYLAVTLLAGITGVVITLCLILIITSST) threads the bilayer. Over 195-203 (KTIRRSYFE) the chain is Cytoplasmic. Residues Arg199 and Ser200 each coordinate FAD. Residues 204–222 (VFWYTHHLFVIFFIGLAIH) traverse the membrane as a helical segment. Heme b-binding residues include Trp206, His209, His222, Arg226, and Ile227. At 223–267 (GAERIVRGQTAESLAVHNITVCEQKISEWGKIKECPIPQFAGNPP) the chain is on the extracellular side. Asn240 carries an N-linked (GlcNAc...) asparagine glycan. Lys255 is covalently cross-linked (Glycyl lysine isopeptide (Lys-Gly) (interchain with G-Cter in ubiquitin)). Residues Met268, Tyr280, and Arg287 each contribute to the heme b site. Residues 268–285 (MTWKWIVGPMFLYLCERL) traverse the membrane as a helical segment. The Cytoplasmic segment spans residues 286-570 (VRFWRSQQKV…VHFIFNKENF (285 aa)). Residues 287-397 (RFWRSQQKVV…DGPFGTASED (111 aa)) form the FAD-binding FR-type domain. Residues Lys294, Lys299, Lys306, Lys328, and Lys334 each participate in a glycyl lysine isopeptide (Lys-Gly) (interchain with G-Cter in ubiquitin) cross-link. Trp337, His338, Pro339, Thr341, His354, Arg356, Trp361, and Thr362 together coordinate FAD. Residue Lys381 forms a Glycyl lysine isopeptide (Lys-Gly) (interchain with G-Cter in ubiquitin) linkage. Positions 411, 446, and 481 each coordinate NADPH. Lys506 participates in a covalent cross-link: Glycyl lysine isopeptide (Lys-Gly) (interchain with G-Cter in ubiquitin). Arg513 is an NADPH binding site. A Glycyl lysine isopeptide (Lys-Gly) (interchain with G-Cter in ubiquitin) cross-link involves residue Lys567.

Component of the phagocyte NADPH oxidase core complex/cytochrome b558 complex, composed of CYBB (heavy chain (beta)) and CYBA (light chain (alpha)). Component of the phagocyte NADPH oxidase complex composed of an obligatory core heterodimer formed by the membrane proteins CYBA and CYBB and the cytosolic regulatory subunits NCF1/p47-phox, NCF2/p67-phox, NCF4/p40-phox and the small GTPase RAC1 or RAC2. Interacts with NCF1 (phosphorylated form). Interacts with NCF2; the interaction is enhanced in the presence of GBP7. Interacts with RAC2. Interacts with RAC1. Interacts with calprotectin (S100A8/9). Interacts with NRROS; the interaction is direct and impairs formation of a stable NADPH oxidase complex. Interacts with CYBC1; CYBC1 may act as a chaperone stabilizing Cytochrome b-245 heterodimer. The CYBA-CYBB complex interacts with GBP7. The cofactor is FAD. In terms of processing, glycosylated. Post-translationally, phosphorylated on Ser and Thr residues by PKC during neutrophils activation. Phosphorylation enhances the NADPH oxidase activity and stimulates its interaction with RAC2, NCF2/p67-phox, and NCF1/p47-phox. Undergoes 'Lys-48'-linked polyubiquitination, likely by RNF145, triggering endoplasmic reticulum-associated degradation. Detected in neutrophils (at protein level).

Its subcellular location is the cell membrane. The catalysed reaction is NADPH + 2 O2 = 2 superoxide + NADP(+) + H(+). Catalytic subunit of the phagocyte NADPH oxidase complex that mediates the transfer of electrons from cytosolic NADPH to O2 to produce the superoxide anion (O2(-)). In the activated complex, electrons are first transferred from NADPH to flavin adenine dinucleotide (FAD) and subsequently transferred via two heme molecules to molecular oxygen, producing superoxide through an outer-sphere reaction. Activation of the NADPH oxidase complex is initiated by the assembly of cytosolic subunits of the NADPH oxidase complex with the core NADPH oxidase complex to form a complex at the plasma membrane or phagosomal membrane. This activation process is initiated by phosphorylation dependent binding of the cytosolic NCF1/p47-phox subunit to the C-terminus of CYBA/p22-phox. NADPH oxidase complex assembly is impaired through interaction with NRROS. This chain is NADPH oxidase 2, found in Homo sapiens (Human).